The following is a 107-amino-acid chain: DNA polymerase delta subunit 4 (107 aa).

Residues 1–16 (MGRKRLITDSYPVVKR) carry the PCNA-interaction protein motif (PIP box) motif. The segment at 1 to 44 (MGRKRLITDSYPVVKRREGPAGHSKGELAPELGEEPQPRDEEEA) is disordered. A compositionally biased stretch (basic and acidic residues) spans 15–28 (KRREGPAGHSKGEL).

The protein belongs to the DNA polymerase delta subunit 4 family. In terms of assembly, component of the tetrameric DNA polymerase delta complex (Pol-delta4), which consists of POLD1/p125, POLD2/p50, POLD3/p66/p68 and POLD4/p12, with POLD1 bearing DNA polymerase and 3' to 5' proofreading exonuclease activities. Within this complex, directly interacts with POLD1 and POLD2. Directly interacts with PCNA, as do POLD1 and POLD3; this interaction stimulates Pol-delta4 polymerase activity. As POLD1 and POLD2, directly interacts with WRNIP1; this interaction stimulates DNA polymerase delta-mediated DNA synthesis, independently of the presence of PCNA. This stimulation may be due predominantly to an increase of initiation frequency and also to increased processivity. Upon genotoxic stress induced by DNA damaging agents or by replication stress, POLD4 is proteolytically degraded and Pol-delta4 is converted into a trimeric form of the complex (Pol-delta3) which has an increased proofreading activity. The DNA polymerase delta complex interacts with POLDIP2; this interaction is probably mediated through direct binding to POLD2. Post-translationally, ubiquitinated; undergoes 'Lys-48'-linked ubiquitination in response to UV irradiation, leading to proteasomal degradation. This modification is partly mediated by RNF8 and by the DCX(DTL) E3 ubiquitin ligase complex (also called CRL4(CDT2)). Efficient degradation requires the presence of PCNA and is required for the inhibition of fork progression after DNA damage.

It localises to the nucleus. In terms of biological role, as a component of the tetrameric DNA polymerase delta complex (Pol-delta4), plays a role in high fidelity genome replication and repair. Within this complex, increases the rate of DNA synthesis and decreases fidelity by regulating POLD1 polymerase and proofreading 3' to 5' exonuclease activity. Pol-delta4 participates in Okazaki fragment processing, through both the short flap pathway, as well as a nick translation system. Under conditions of DNA replication stress, required for the repair of broken replication forks through break-induced replication (BIR), a mechanism that may induce segmental genomic duplications of up to 200 kb. Involved in Pol-delta4 translesion synthesis (TLS) of templates carrying O6-methylguanine or abasic sites. Its degradation in response to DNA damage is required for the inhibition of fork progression and cell survival. The sequence is that of DNA polymerase delta subunit 4 (POLD4) from Homo sapiens (Human).